We begin with the raw amino-acid sequence, 267 residues long: 5'-nucleotidase SurE (267 aa).

Residues D14, D15, S45, and N100 each coordinate a divalent metal cation.

Belongs to the SurE nucleotidase family. The cofactor is a divalent metal cation.

It is found in the cytoplasm. The catalysed reaction is a ribonucleoside 5'-phosphate + H2O = a ribonucleoside + phosphate. In terms of biological role, nucleotidase that shows phosphatase activity on nucleoside 5'-monophosphates. The chain is 5'-nucleotidase SurE from Methanosarcina barkeri (strain Fusaro / DSM 804).